We begin with the raw amino-acid sequence, 170 residues long: Photosystem I assembly protein Ycf3 (170 aa).

TPR repeat units lie at residues 35-68 (AFTY…EIDP), 72-105 (SYIL…NPFL), and 120-153 (GEQA…TPGN).

This sequence belongs to the Ycf3 family.

The protein resides in the plastid. It localises to the chloroplast thylakoid membrane. Its function is as follows. Essential for the assembly of the photosystem I (PSI) complex. May act as a chaperone-like factor to guide the assembly of the PSI subunits. The chain is Photosystem I assembly protein Ycf3 from Saccharum officinarum (Sugarcane).